We begin with the raw amino-acid sequence, 430 residues long: Adenylosuccinate synthetase (430 aa).

Residues G12–K18 and G40–T42 each bind GTP. Residue D13 is the Proton acceptor of the active site. D13 and G40 together coordinate Mg(2+). IMP-binding positions include D13–K16, N38–H41, T128, R142, Q223, T238, and R302. Residue H41 is the Proton donor of the active site. T298–R304 is a substrate binding site. GTP-binding positions include R304, S330–D332, and S413–G415.

Belongs to the adenylosuccinate synthetase family. In terms of assembly, homodimer. Mg(2+) serves as cofactor.

It localises to the cytoplasm. It catalyses the reaction IMP + L-aspartate + GTP = N(6)-(1,2-dicarboxyethyl)-AMP + GDP + phosphate + 2 H(+). It functions in the pathway purine metabolism; AMP biosynthesis via de novo pathway; AMP from IMP: step 1/2. Functionally, plays an important role in the de novo pathway of purine nucleotide biosynthesis. Catalyzes the first committed step in the biosynthesis of AMP from IMP. The protein is Adenylosuccinate synthetase of Lactococcus lactis subsp. cremoris (strain MG1363).